The following is a 543-amino-acid chain: Glutamyl-tRNA(Gln) amidotransferase subunit A, chloroplastic/mitochondrial (543 aa).

Catalysis depends on charge relay system residues Lys-121 and Ser-196. Residue Ser-220 is the Acyl-ester intermediate of the active site.

Belongs to the amidase family. GatA subfamily. In terms of assembly, subunit of the heterotrimeric GatCAB amidotransferase (AdT) complex, composed of A, B and C subunits.

It is found in the mitochondrion. The protein localises to the plastid. Its subcellular location is the chloroplast stroma. It catalyses the reaction L-glutamyl-tRNA(Gln) + L-glutamine + ATP + H2O = L-glutaminyl-tRNA(Gln) + L-glutamate + ADP + phosphate + H(+). Allows the formation of correctly charged Gln-tRNA(Gln) through the transamidation of misacylated Glu-tRNA(Gln) in chloroplasts and mitochondria. The reaction takes place in the presence of glutamine and ATP through an activated gamma-phospho-Glu-tRNA(Gln). The sequence is that of Glutamyl-tRNA(Gln) amidotransferase subunit A, chloroplastic/mitochondrial from Zea mays (Maize).